The primary structure comprises 512 residues: Probable cytosol aminopeptidase (512 aa).

Mn(2+) contacts are provided by K281 and D286. Residue K293 is part of the active site. D304, D363, and E365 together coordinate Mn(2+). R367 is a catalytic residue.

This sequence belongs to the peptidase M17 family. The cofactor is Mn(2+).

Its subcellular location is the cytoplasm. The catalysed reaction is Release of an N-terminal amino acid, Xaa-|-Yaa-, in which Xaa is preferably Leu, but may be other amino acids including Pro although not Arg or Lys, and Yaa may be Pro. Amino acid amides and methyl esters are also readily hydrolyzed, but rates on arylamides are exceedingly low.. The enzyme catalyses Release of an N-terminal amino acid, preferentially leucine, but not glutamic or aspartic acids.. Its function is as follows. Presumably involved in the processing and regular turnover of intracellular proteins. Catalyzes the removal of unsubstituted N-terminal amino acids from various peptides. The protein is Probable cytosol aminopeptidase of Koribacter versatilis (strain Ellin345).